Here is a 576-residue protein sequence, read N- to C-terminus: Tudor and KH domain-containing protein homolog (576 aa).

The tract at residues 40 to 60 (EEADSGGQRPASGIRGQTEEQ) is disordered. KH domains follow at residues 65 to 127 (EVCL…RALL) and 136 to 199 (VVKV…RKML). The segment covering 209-224 (LVRSMEEVEQRREPRR) has biased composition (basic and acidic residues). Residues 209–253 (LVRSMEEVEQRREPRRSPTNSIASSMYSSQTSLSSHTQPRDKLMA) are disordered. Positions 232 to 243 (SSMYSSQTSLSS) are enriched in low complexity. The region spanning 310–375 (APYVGQIVAA…CELRTDFLTL (66 aa)) is the Tudor domain. A disordered region spans residues 556–576 (ATDLENGNNNNASTTNGASAH). Low complexity predominate over residues 561 to 576 (NGNNNNASTTNGASAH).

Belongs to the Tdrkh family. As to quaternary structure, interacts (via C-terminus) with AGO3 (via the N-terminal region when symmetrically methylated on arginine residues); this interaction is RNA-independent and may be required for AGO3 localization to the nuage. Interacts (via Tudor domain) with piwi (via N-terminus). Interacts with tral and me31B. In terms of tissue distribution, ovaries (at protein level). Expressed in the ovary and testis.

It localises to the cytoplasm. The protein resides in the nucleus. The protein localises to the cytoplasmic ribonucleoprotein granule. In terms of biological role, involved in the piwi-interacting RNA (piRNA) metabolic process, which mediates the repression of transposable elements during meiosis by forming complexes composed of piRNAs and Piwi proteins, and governs the methylation and subsequent repression of transposons which is essential for germline integrity. Likely to act by recruiting Piwi proteins such as AGO3 and piwi to the piRNA biogenesis machinery in the nuage. Required for the final steps of primary piRNA biogenesis by participating in the 3' end-trimming of piwi-bound intermediates into mature piRNAs. This is Tudor and KH domain-containing protein homolog from Drosophila melanogaster (Fruit fly).